Consider the following 195-residue polypeptide: Putative C-P lyase subunit protein HtxG (195 aa).

This sequence belongs to the PhnH family.

Functionally, belongs to an operon involved in hypophosphite oxidation. Exact function not known. This chain is Putative C-P lyase subunit protein HtxG (htxG), found in Stutzerimonas stutzeri (Pseudomonas stutzeri).